The following is a 613-amino-acid chain: Protein translocase subunit SecD (613 aa).

The next 6 membrane-spanning stretches (helical) occupy residues 10 to 30, 452 to 472, 477 to 497, 503 to 523, 548 to 568, and 576 to 596; these read ALVV…WFYF, KGTL…VVYY, LVAD…MSMI, LPGI…NVLI, VFWT…VLFQ, and GFAV…IVVT.

This sequence belongs to the SecD/SecF family. SecD subfamily. In terms of assembly, forms a complex with SecF. Part of the essential Sec protein translocation apparatus which comprises SecA, SecYEG and auxiliary proteins SecDF-YajC and YidC.

The protein resides in the cell inner membrane. Part of the Sec protein translocase complex. Interacts with the SecYEG preprotein conducting channel. SecDF uses the proton motive force (PMF) to complete protein translocation after the ATP-dependent function of SecA. This Anaeromyxobacter dehalogenans (strain 2CP-C) protein is Protein translocase subunit SecD.